The primary structure comprises 98 residues: NADH-ubiquinone oxidoreductase chain 4L (98 aa).

The next 3 membrane-spanning stretches (helical) occupy residues 1–21 (MPLI…GLLM), 29–49 (ALLC…LLAL), and 61–81 (IILL…LVMI).

This sequence belongs to the complex I subunit 4L family. Core subunit of respiratory chain NADH dehydrogenase (Complex I) which is composed of 45 different subunits.

It localises to the mitochondrion inner membrane. It catalyses the reaction a ubiquinone + NADH + 5 H(+)(in) = a ubiquinol + NAD(+) + 4 H(+)(out). In terms of biological role, core subunit of the mitochondrial membrane respiratory chain NADH dehydrogenase (Complex I) which catalyzes electron transfer from NADH through the respiratory chain, using ubiquinone as an electron acceptor. Part of the enzyme membrane arm which is embedded in the lipid bilayer and involved in proton translocation. This chain is NADH-ubiquinone oxidoreductase chain 4L (MT-ND4L), found in Kogia breviceps (Pygmy sperm whale).